Consider the following 391-residue polypeptide: MSELRLCCDLLVQQVDKTKEVTTTGVSNSEEGIDVGTLLKSTCNTFLKTLEECMQIANAAFTSELLYHTPPGSPQLAMLKSSKMKHPIIPIHNSLERQTELSTCENGSLNMEINGEEEILMKNKNSLYLKSAEIDCSISSEENTDDNITVQGEIMKEDRMENLKNHDNNLSQSGSDSSCSPECLWEEGKEVIPTFFSTMNTSFSDIELLEDSGIPTEAFLASCCAVVPVLDKLGPTVFAPVKMDLVENIKKVNQKYITNKEEFTTLQKIVLHEVEADVAQVRNSATEALLWLKRGLKFLKGFLTEVKNGEKDIQTALNNAYGKTLRQHHGWVVRGVFALALRATPSYEDFVAALTVKEGDHRKEAFSIGMQRDLSLYLPAMKKQMAILDAL.

In Homo sapiens (Human), this protein is Putative protein PLEKHA9 (PLEKHA8P1).